The sequence spans 40 residues: Submaxillary gland androgen-regulated protein 2, isoform epsilon (40 aa).

Positions M1 to C20 are cleaved as a signal peptide.

Its subcellular location is the secreted. Its function is as follows. May play a role in protection or detoxification. This Mus musculus (Mouse) protein is Submaxillary gland androgen-regulated protein 2, isoform epsilon (Smr2).